A 434-amino-acid polypeptide reads, in one-letter code: Nicotinate phosphoribosyltransferase (434 aa).

Histidine 242 is modified (phosphohistidine; by autocatalysis).

This sequence belongs to the NAPRTase family. In terms of processing, transiently phosphorylated on a His residue during the reaction cycle. Phosphorylation strongly increases the affinity for substrates and increases the rate of nicotinate D-ribonucleotide production. Dephosphorylation regenerates the low-affinity form of the enzyme, leading to product release.

It carries out the reaction nicotinate + 5-phospho-alpha-D-ribose 1-diphosphate + ATP + H2O = nicotinate beta-D-ribonucleotide + ADP + phosphate + diphosphate. It functions in the pathway cofactor biosynthesis; NAD(+) biosynthesis; nicotinate D-ribonucleotide from nicotinate: step 1/1. Catalyzes the synthesis of beta-nicotinate D-ribonucleotide from nicotinate and 5-phospho-D-ribose 1-phosphate at the expense of ATP. The protein is Nicotinate phosphoribosyltransferase of Brucella abortus (strain S19).